A 75-amino-acid polypeptide reads, in one-letter code: Large ribosomal subunit protein uL24c (75 aa).

The protein belongs to the universal ribosomal protein uL24 family. In terms of assembly, part of the 50S ribosomal subunit.

It localises to the plastid. The protein resides in the chloroplast. One of two assembly initiator proteins, it binds directly to the 5'-end of the 23S rRNA, where it nucleates assembly of the 50S subunit. In Cyanidioschyzon merolae (strain NIES-3377 / 10D) (Unicellular red alga), this protein is Large ribosomal subunit protein uL24c (rpl24).